Consider the following 117-residue polypeptide: Prefoldin subunit beta (117 aa).

The protein belongs to the prefoldin subunit beta family. As to quaternary structure, heterohexamer of two alpha and four beta subunits.

It is found in the cytoplasm. Functionally, molecular chaperone capable of stabilizing a range of proteins. Seems to fulfill an ATP-independent, HSP70-like function in archaeal de novo protein folding. This Methanosarcina acetivorans (strain ATCC 35395 / DSM 2834 / JCM 12185 / C2A) protein is Prefoldin subunit beta (pfdB).